The following is a 489-amino-acid chain: Metal cation symporter ZIP14 (489 aa).

A signal peptide spans 1–28 (MKRLHPALPSCLLLVLFGIWRTAPQTHA). Residues 29 to 155 (SSAGLPPLSA…PSAIEVWGYG (127 aa)) are Extracellular-facing. Asn52, Asn75, Asn85, and Asn100 each carry an N-linked (GlcNAc...) asparagine glycan. A helical membrane pass occupies residues 156–176 (FLCVTVISLCSLMGASVVPFM). Residues 177–184 (KKTFYKRL) lie on the Cytoplasmic side of the membrane. The chain crosses the membrane as a helical span at residues 185-205 (LLYFIALAIGTLYSNALFQLI). At 206–221 (PEAFGFNPQDNYVSKS) the chain is on the extracellular side. Residues 222-242 (AVVFGGFYLFFFTEKILKMLL) form a helical membrane-spanning segment. Residues 243–349 (KQKNEHHHGH…SDGLHNFIDG (107 aa)) lie on the Cytoplasmic side of the membrane. The HHHGHXHX-motif signature appears at 248–255 (HHHGHNHF). The chain crosses the membrane as a helical span at residues 350–370 (LAIGASFTVSVFQGISTSVAI). The Extracellular portion of the chain corresponds to 371 to 394 (LCEEFPHELGDFVILLNAGMSIQQ). The XEXPHE-motif motif lies at 373-378 (EEFPHE). Residues 395-415 (ALFFNFLSACCCYLGLAFGIL) traverse the membrane as a helical segment. At 416–421 (AGSHFS) the chain is on the cytoplasmic side. The helical transmembrane segment at 422 to 442 (ANWIFALAGGMFLYIALADMF) threads the bilayer. Residues 443–457 (PEMNEVCQEDEKNDS) are Extracellular-facing. The helical transmembrane segment at 458-478 (FLVPFVIQNLGLLTGFSIMLV) threads the bilayer. Residues 479–489 (LTMYSGQIQIG) lie on the Cytoplasmic side of the membrane.

Belongs to the ZIP transporter (TC 2.A.5) family. Homotrimer. Post-translationally, ubiquitinated. Ubiquitination occurs upon iron depletion. The ubiquitinated form undergoes proteasomal degradation. In terms of processing, N-glycosylated. N-glycosylation at Asn-100 is required for iron-regulated extraction of the transporter from membranes and subsequent proteasomal degradation. Widely expressed. Highly and transiently expressed during the early stage of adipocyte differentiation. Strongly expressed in liver, preadipocyte, duodenum and jejunum, moderately in brain, heart, skeletal muscle, spleen, pancreas, kidney and white adipose cells. Expression is almost undetectable in lung, testis and brown adipose cells. Expressed by chondrocytes and pituitary cells. As to expression, more strongly expressed in brain. In terms of tissue distribution, more strongly expressed in liver, kidney and duodenum.

The protein localises to the cell membrane. It is found in the apical cell membrane. Its subcellular location is the basolateral cell membrane. It localises to the early endosome membrane. The protein resides in the late endosome membrane. The protein localises to the lysosome membrane. It carries out the reaction Zn(2+)(out) + 2 hydrogencarbonate(out) = Zn(2+)(in) + 2 hydrogencarbonate(in). The enzyme catalyses Mn(2+)(out) + 2 hydrogencarbonate(out) = Mn(2+)(in) + 2 hydrogencarbonate(in). The catalysed reaction is Fe(2+)(out) + 2 hydrogencarbonate(out) = Fe(2+)(in) + 2 hydrogencarbonate(in). It catalyses the reaction Cd(2+)(out) + 2 hydrogencarbonate(out) = Cd(2+)(in) + 2 hydrogencarbonate(in). With respect to regulation, inhibited by cyanide and therefore dependent of an energy source. Inhibited by DIDS/4,4'-diisothiocyanatostilbene-2,2'-disulfonic acid, an inhibitor hydrogencarbonate-dependent transporters. Its function is as follows. Electroneutral transporter of the plasma membrane mediating the cellular uptake of the divalent metal cations zinc, manganese and iron that are important for tissue homeostasis, metabolism, development and immunity. Functions as an energy-dependent symporter, transporting through the membranes an electroneutral complex composed of a divalent metal cation and two bicarbonate anions. Beside these endogenous cellular substrates, can also import cadmium a non-essential metal which is cytotoxic and carcinogenic. Controls the cellular uptake by the intestinal epithelium of systemic zinc, which is in turn required to maintain tight junctions and the intestinal permeability. Modifies the activity of zinc-dependent phosphodiesterases, thereby indirectly regulating G protein-coupled receptor signaling pathways important for gluconeogenesis and chondrocyte differentiation. Regulates insulin receptor signaling, glucose uptake, glycogen synthesis and gluconeogenesis in hepatocytes through the zinc-dependent intracellular catabolism of insulin. Through zinc cellular uptake also plays a role in the adaptation of cells to endoplasmic reticulum stress. Major manganese transporter of the basolateral membrane of intestinal epithelial cells, it plays a central role in manganese systemic homeostasis through intestinal manganese uptake. Also involved in manganese extracellular uptake by cells of the blood-brain barrier. May also play a role in manganese and zinc homeostasis participating in their elimination from the blood through the hepatobiliary excretion. Also functions in the extracellular uptake of free iron. May also function intracellularly and mediate the transport from endosomes to cytosol of iron endocytosed by transferrin. Plays a role in innate immunity by regulating the expression of cytokines by activated macrophages. The polypeptide is Metal cation symporter ZIP14 (Mus musculus (Mouse)).